A 1353-amino-acid chain; its full sequence is DNA-directed RNA polymerase subunit beta' (1353 aa).

The tract at residues 1 to 117 (MSDNRLFTSV…AFQKLNDLFK (117 aa)) is unknown. The interval 118-1353 (LYNHFPSISS…SELTKKTNQN (1236 aa)) is DNA-directed RNA polymerase subunit beta'. Residues cysteine 189, cysteine 191, cysteine 203, and cysteine 206 each coordinate Zn(2+). Residues aspartate 578, aspartate 580, and aspartate 582 each contribute to the Mg(2+) site.

It belongs to the RNA polymerase beta' chain family. As to quaternary structure, the RNAP catalytic core consists of 2 alpha, 1 beta, 1 beta' and 1 omega subunit. When a sigma factor is associated with the core the holoenzyme is formed, which can initiate transcription. Mg(2+) is required as a cofactor. It depends on Zn(2+) as a cofactor.

The enzyme catalyses RNA(n) + a ribonucleoside 5'-triphosphate = RNA(n+1) + diphosphate. Functionally, DNA-dependent RNA polymerase catalyzes the transcription of DNA into RNA using the four ribonucleoside triphosphates as substrates. In Aster yellows witches'-broom phytoplasma (strain AYWB), this protein is DNA-directed RNA polymerase subunit beta'.